The sequence spans 432 residues: FAD-dependent monooxygenase pynG (432 aa).

FAD-binding residues include glutamate 32, arginine 103, aspartate 315, and alanine 328.

It belongs to the paxM FAD-dependent monooxygenase family. FAD is required as a cofactor.

It participates in secondary metabolite biosynthesis. Functionally, FAD-dependent monooxygenase; part of the gene cluster that mediates the biosynthesis of pyranonigrins, a family of antioxidative compounds. The first step of pyranonigrins biosynthesis is performed by the hybrid PKS-NRPS synthetase that condenses 6 malonyl-CoA units to an acetyl starter unit, to form a 1,3,5-trioxotetradecane-6,8-dienyl-ACP. The enoyl reductase (ER) domain of pynA is likely to be functional during the first two rounds of polyketide chain extension, to generate the saturated C-C bonds of the alkyl side chain. PynA subsequently forms the amide bond between the acyl chain and L-serine. Although pynA has a terminal reductase domain, it appears to require the thioesterase pynI for the release of the straight-chain intermediate from pynA via the formation of a tetramic acid pyranonigrin J. The methyltransferase pynC then coverts pyranonigrin J to pyranonigrin I via N-methylation. The FAD-dependent monooxygenase pynG catalyzes an epoxidation-mediated cyclization to form the dihydro-gamma-pyrone moiety, followed by pynD-catalyzed oxidation of the alcohol to the ketone and enolization to yield the characteristic tetramic acid-fused gamma-pyrone core of pyranonigrin H. Pyranonigrin H is substrate of pynH for dehydration-mediated exo-methylene formation from the serine side chain to produce pyranonigrin E, before the oxidase pynE reduces the exo-methylene of pyranonigrin E into a pendant methyl to form pyranonigrin G. The FAD-linked oxidoreductase pynB performs the reverse reaction and converts pyranonigrin G back to pyranonigrin E. The sequence is that of FAD-dependent monooxygenase pynG from Aspergillus niger (strain ATCC MYA-4892 / CBS 513.88 / FGSC A1513).